Here is a 309-residue protein sequence, read N- to C-terminus: Olfactory receptor 10J5 (309 aa).

The Extracellular segment spans residues 1-27 (MQRNNFTEVIEFVFLGFSSFGKHQITL). A helical membrane pass occupies residues 28-48 (FVVFLTIYILTLAGNIIIVTI). Over 49 to 57 (THIDHHLHT) the chain is Cytoplasmic. The helical transmembrane segment at 58–78 (PMYFFLSMLASSETVYTLVIV) threads the bilayer. Residues 79–84 (PRMLSS) lie on the Extracellular side of the membrane. A helical membrane pass occupies residues 85-105 (LIFYNLPISLAGCATQMFFFV). Cysteines 97 and 178 form a disulfide. Residues 106–131 (TLATNNCFLLTAMGYDRYVAICNPLR) lie on the Cytoplasmic side of the membrane. Residues 132-152 (YTIIMSKGMCALLVCGSLGTG) form a helical membrane-spanning segment. Over 153–203 (LVMAVLHVPAMFHLPFCGTVVEHFFCDIYPVMKLSCVDTTVNEIINYGVSS) the chain is Extracellular. A helical transmembrane segment spans residues 204–224 (FVILVPIGLIFISYVLIVSSI). The Cytoplasmic segment spans residues 225-235 (LKIVSTEGQKK). A helical membrane pass occupies residues 236 to 256 (AFATCASHLTVVIVHYGCASI). Topologically, residues 257 to 270 (AYLKPKSESSVEKD) are extracellular. A helical transmembrane segment spans residues 271–291 (LLLSVTYTIITPLLNPVVYSL). At 292–309 (RNKEVKDALCRAVGRNTS) the chain is on the cytoplasmic side.

The protein belongs to the G-protein coupled receptor 1 family. As to expression, expressed in the olfactory epithelium as well as in the testis. Expressed in round spermatids during stages VI-VIII of spermatogenesis.

The protein resides in the cell membrane. In terms of biological role, olfactory receptor. Activated by the synthetic floral odorant, lyral, and by alpha-cedrene, a sesquiterpene constituent of cedarwood oil. Its activation increases intracellular Ca(2+). Acts as a key regulator of myogenesis through its actions on cell migration and adhesion by activating the Ca(2+)-dependent AKT signal transduction pathway. Also acts as a regulator of angiogenesis. Moreover, plays a role in the regulation of lipid accumulation in hepatocytes via the cAMP-PKA pathway. Involved in sperm chemotaxis and motility. This Mus musculus (Mouse) protein is Olfactory receptor 10J5.